Consider the following 181-residue polypeptide: Acireductone dioxygenase (181 aa).

Residues histidine 97, histidine 99, glutamate 103, and histidine 141 each coordinate Fe(2+). Ni(2+)-binding residues include histidine 97, histidine 99, glutamate 103, and histidine 141.

It belongs to the acireductone dioxygenase (ARD) family. In terms of assembly, monomer. Fe(2+) is required as a cofactor. It depends on Ni(2+) as a cofactor.

It carries out the reaction 1,2-dihydroxy-5-(methylsulfanyl)pent-1-en-3-one + O2 = 3-(methylsulfanyl)propanoate + CO + formate + 2 H(+). The enzyme catalyses 1,2-dihydroxy-5-(methylsulfanyl)pent-1-en-3-one + O2 = 4-methylsulfanyl-2-oxobutanoate + formate + 2 H(+). It participates in amino-acid biosynthesis; L-methionine biosynthesis via salvage pathway; L-methionine from S-methyl-5-thio-alpha-D-ribose 1-phosphate: step 5/6. Catalyzes 2 different reactions between oxygen and the acireductone 1,2-dihydroxy-3-keto-5-methylthiopentene (DHK-MTPene) depending upon the metal bound in the active site. Fe-containing acireductone dioxygenase (Fe-ARD) produces formate and 2-keto-4-methylthiobutyrate (KMTB), the alpha-ketoacid precursor of methionine in the methionine recycle pathway. Ni-containing acireductone dioxygenase (Ni-ARD) produces methylthiopropionate, carbon monoxide and formate, and does not lie on the methionine recycle pathway. In Pseudomonas syringae pv. tomato (strain ATCC BAA-871 / DC3000), this protein is Acireductone dioxygenase.